We begin with the raw amino-acid sequence, 687 residues long: Adhesion G-protein coupled receptor G1 (687 aa).

The N-terminal stretch at 1-25 is a signal peptide; that stretch reads MTAQSLLQTTLFLLSLLFLVQGAHG. 26–33 lines the heparin pocket; sequence RGHREDFR. Residues 26–402 are Extracellular-facing; it reads RGHREDFRFC…VEVDAVHKHY (377 aa). 2 disulfides stabilise this stretch: cysteine 35/cysteine 91 and cysteine 121/cysteine 177. 3 N-linked (GlcNAc...) asparagine glycosylation sites follow: asparagine 39, asparagine 148, and asparagine 171. A heparin-binding site is contributed by 190–200; that stretch reads LKHPQKASRRP. A GAIN-B domain is found at 224–395; that stretch reads DTVSFEEDRI…AVLMVSSVEV (172 aa). N-linked (GlcNAc...) asparagine glycosylation is found at asparagine 234, asparagine 303, asparagine 324, and asparagine 341. 2 disulfide bridges follow: cysteine 346/cysteine 377 and cysteine 366/cysteine 379. The tract at residues 346-395 is GPS; sequence CVFWVEDPTLSSPGHWSSAGCETVRRETQTSCLCNHLTYFAVLMVSSVEV. Residues 384–397 form a stachel region; that stretch reads YFAVLMVSSVEVDA. A helical transmembrane segment spans residues 403-423; it reads LSLLSYVGCVVSALACVVTIA. Residues 424 to 442 lie on the Cytoplasmic side of the membrane; that stretch reads AYLCSRRKPRDYTIKVHMN. Residues 443–463 traverse the membrane as a helical segment; sequence LLLAVFLLDTSFLLSEPVALT. Topologically, residues 464–470 are extracellular; it reads GSEAGCR. A helical transmembrane segment spans residues 471 to 491; that stretch reads ASAIFLHFSLLACLSWMGLEG. The Cytoplasmic segment spans residues 492–512; it reads YNLYRLVVEVFGTYVPGYLLK. A helical transmembrane segment spans residues 513-533; sequence LSAMGWGFPIFLVTLVALVDV. At 534–570 the chain is on the extracellular side; that stretch reads DNYGPIILAVHRTPEGVIYPSMCWIRDSLVSYITNLG. The chain crosses the membrane as a helical span at residues 571 to 591; that stretch reads LFSLVFLFNMAMLATMVVQIL. The Cytoplasmic segment spans residues 592 to 603; sequence RLRPHTQKWSHV. Residues 604 to 624 form a helical membrane-spanning segment; that stretch reads LTLLGLSLVLGLPWALIFFSF. The Extracellular segment spans residues 625–630; sequence ASGTFQ. Residues 631-651 form a helical membrane-spanning segment; sequence LVILYLFSIITSFQGFLIFIW. The Cytoplasmic segment spans residues 652 to 687; sequence YWSMRLQARGGPSPLKSNSDSARLPISSGSTSSSRI. Positions 664–687 are disordered; sequence SPLKSNSDSARLPISSGSTSSSRI. Residues 678–687 are compositionally biased toward low complexity; that stretch reads SSGSTSSSRI.

It belongs to the G-protein coupled receptor 2 family. LN-TM7 subfamily. Heterodimer of 2 chains generated by proteolytic processing; the large extracellular N-terminal fragment (ADGRG1 NT) and the membrane-bound C-terminal fragment (ADGRG1-CT) predominantly remain associated and non-covalently linked. ADGRG1 NT self-associates in a trans-trans manner; the homophilic interaction enhances receptor signaling. Interacts with TGM2. Interacts with heparin; leading to the reduction of ADGRG1 shedding. Interacts with COL3A1. Part of a GPCR-tetraspanin complex at least consisting of ADGRG1, CD81, eventually CD9, and GNA11 in which CD81 is enhancing the association of ADGRG1 with GNA11. Post-translationally, autoproteolytically cleaved into 2 fragments; the large extracellular N-terminal fragment (ADGRG1 NT) and the membrane-bound C-terminal fragment (ADGRG1 CT) predominantly remain associated and non-covalently linked. Shedding to yield the secreted ADGRG1 N-terminal fragment seems to involve metalloprotease(s). In terms of processing, ubiquitinated. Undergoes polyubiquitination upon activation.

It is found in the cell membrane. The protein localises to the secreted. It localises to the membrane raft. Forms a heterodimer of 2 chains generated by proteolytic processing that remain associated through non-covalent interactions mediated by the GAIN-B domain. In the inactivated receptor, the Stachel sequence (also named stalk) is embedded in the GAIN-B domain, where it adopts a beta-strand conformation. On activation, the Stachel moves into the 7 transmembrane region and adopts a twisted hook-shaped configuration that forms contacts within the receptor, leading to coupling of a G-alpha protein, which activates signaling. The cleaved GAIN-B and N-terminal domains can then dissociate from the rest of the receptor. Its function is as follows. Adhesion G-protein coupled receptor (aGPCR) for steroid hormone 17alpha-hydroxypregnenolone (17-OH), which is involved in cell adhesion and cell-cell interactions. Ligand binding causes a conformation change that triggers signaling via guanine nucleotide-binding proteins (G proteins) and modulates the activity of downstream effectors, such as RhoA pathway. ADGRG1 is coupled to G(12) and/or G(13) G proteins (GNA12 and GNA13, respectively) and mediates the activation Rho small GTPases. Acts as a potent suppressor of ferroptosis: binding to 17-OH-binding initiates signaling that down-regulates CD36 and alleviates ferroptosis-induced liver injury. Ligand-binding also induces cell adhesion activity via association with proteins such as collagen III/COL3A1 and TGM2. Mediates cell matrix adhesion in developing neurons and hematopoietic stem cells. Involved in cortical development, specifically in maintenance of the pial basement membrane integrity and in cortical lamination: association with COL3A1 in the developing brain inhibits neuronal migration via activation of the RhoA pathway. Together with TGM2, acts as a regulator of myelination and myelin repair in oligodendrocyte precursor cells. Acts as a hemostatic sensor of shear force: G protein-coupled receptor signaling is activated in response to shear force in platelets, promoting G(13) G protein signaling, and platelet shape change and aggregation in a COL3A1-dependent manner. Acts as an inhibitor of VEGFA production thereby inhibiting angiogenesis through a signaling pathway mediated by PRKCA. Plays a role in the maintenance of hematopoietic stem cells in bone marrow niche. Plays an essential role in testis development. The protein is Adhesion G-protein coupled receptor G1 (ADGRG1) of Pan troglodytes (Chimpanzee).